We begin with the raw amino-acid sequence, 536 residues long: Zinc finger protein 394 (536 aa).

The interval 18 to 45 is disordered; sequence AVKVEEDSPGSQEPSGSGDWQNPETSRK. Lys-20 is covalently cross-linked (Glycyl lysine isopeptide (Lys-Gly) (interchain with G-Cter in SUMO2)). A compositionally biased stretch (polar residues) spans 26 to 41; it reads PGSQEPSGSGDWQNPE. The SCAN box domain maps to 44–126; the sequence is RKQFRQLRYQ…ALARTLQRAL (83 aa). The KRAB domain maps to 135 to 196; it reads ATFKDVAESL…KQEMSKEAES (62 aa). Residues Lys-207 and Lys-260 each participate in a glycyl lysine isopeptide (Lys-Gly) (interchain with G-Cter in SUMO2) cross-link. C2H2-type zinc fingers lie at residues 328 to 350, 356 to 378, and 384 to 406; these read YKCD…QRTH, YQCQ…QRTH, and YACP…QRTH. The C2H2-type 4; atypical zinc finger occupies 412 to 433; it reads CKCEECGEIFHISSLFKHQRLH. Lys-413 is covalently cross-linked (Glycyl lysine isopeptide (Lys-Gly) (interchain with G-Cter in SUMO2)). 3 consecutive C2H2-type zinc fingers follow at residues 439–461, 467–489, and 495–517; these read HKCE…QRIH, YMCF…QRTH, and YKCF…QRIH.

This sequence belongs to the krueppel C2H2-type zinc-finger protein family.

The protein resides in the nucleus. Its function is as follows. May be involved in transcriptional regulation. The sequence is that of Zinc finger protein 394 (Znf394) from Rattus norvegicus (Rat).